A 446-amino-acid polypeptide reads, in one-letter code: 5-hydroxytryptamine receptor 7 (446 aa).

At 1 to 84 (MMGVNSSGRP…INYGRAEKVV (84 aa)) the chain is on the extracellular side. N-linked (GlcNAc...) asparagine glycosylation is found at Asn5 and Asn67. A helical transmembrane segment spans residues 85–109 (IGSILTLITLLTIAGNCLVVISVCF). The Cytoplasmic portion of the chain corresponds to 110-119 (VKKLRQPSNY). The chain crosses the membrane as a helical span at residues 120 to 141 (LIVSLALADLSVAVAVIPFVSV). Over 142–153 (TDLIGGKWIFGH) the chain is Extracellular. A helical transmembrane segment spans residues 154-179 (FFCNVFIAMDVMCCTASIMTLCVISI). A disulfide bridge connects residues Cys156 and Cys232. Asp163 serves as a coordination point for serotonin. The Cytoplasmic segment spans residues 180 to 199 (DRYLGITRPLTYPVRQNGKC). The chain crosses the membrane as a helical span at residues 200–220 (MPKMILSVWLLSASITLPPLF). Residues 221–238 (GWAQNVNDDKVCLISQDF) lie on the Extracellular side of the membrane. A helical membrane pass occupies residues 239–261 (GYTIYSTAVAFYIPMSVMLFMYY). Over 262-327 (RIYKAARKSA…SIFKREQKAA (66 aa)) the chain is Cytoplasmic. Residues 328–353 (TTLGIIVGAFTVCWLPFFLLSTARPF) form a helical membrane-spanning segment. Residues 354-364 (ICGTACSCIPL) lie on the Extracellular side of the membrane. The helical transmembrane segment at 365–388 (WVERTCLWLGYANSLINPFIYAFF) threads the bilayer. Residues 389-446 (NRDLRTTYRSLLQCQYRNINRKLSAAGMHEALKLAERPERPECVLQNSDYCRKKGHDS) are Cytoplasmic-facing. Cys402 carries the S-palmitoyl cysteine lipid modification.

This sequence belongs to the G-protein coupled receptor 1 family.

The protein localises to the cell membrane. Its function is as follows. G-protein coupled receptor for 5-hydroxytryptamine (serotonin), a biogenic hormone that functions as a neurotransmitter, a hormone and a mitogen. Ligand binding causes a conformation change that triggers signaling via guanine nucleotide-binding proteins (G proteins) and modulates the activity of downstream effectors. HTR7 is coupled to G(s) G alpha proteins and mediates activation of adenylate cyclase activity. The protein is 5-hydroxytryptamine receptor 7 (HTR7) of Cavia porcellus (Guinea pig).